Here is a 173-residue protein sequence, read N- to C-terminus: Photosystem I assembly protein Ycf3 (173 aa).

TPR repeat units follow at residues Ala35–Pro68, Ser72–Met105, and Gly120–Asn153.

This sequence belongs to the Ycf3 family.

It localises to the cellular thylakoid membrane. Essential for the assembly of the photosystem I (PSI) complex. May act as a chaperone-like factor to guide the assembly of the PSI subunits. This Synechocystis sp. (strain ATCC 27184 / PCC 6803 / Kazusa) protein is Photosystem I assembly protein Ycf3.